A 496-amino-acid chain; its full sequence is Trimethylamine methyltransferase MttB (496 aa).

Residue Pyl-331 is a non-standard amino acid, pyrrolysine.

The protein belongs to the trimethylamine methyltransferase family.

The catalysed reaction is Co(I)-[trimethylamine-specific corrinoid protein] + trimethylamine + H(+) = methyl-Co(III)-[trimethylamine-specific corrinoid protein] + dimethylamine. Catalyzes the transfer of a methyl group from trimethylamine to the corrinoid cofactor of MttC. This is Trimethylamine methyltransferase MttB from Desulfitobacterium hafniense (strain DSM 10664 / DCB-2).